Here is a 149-residue protein sequence, read N- to C-terminus: Putative pre-16S rRNA nuclease (149 aa).

This sequence belongs to the YqgF nuclease family.

The protein resides in the cytoplasm. Could be a nuclease involved in processing of the 5'-end of pre-16S rRNA. This chain is Putative pre-16S rRNA nuclease, found in Burkholderia multivorans (strain ATCC 17616 / 249).